A 291-amino-acid chain; its full sequence is Phosphate import ATP-binding protein PstB (291 aa).

The ABC transporter domain occupies 43 to 286 (ANVKDLSFWY…PKHAMTEEYI (244 aa)). 75–82 (GASGCGKS) is a binding site for ATP.

Belongs to the ABC transporter superfamily. Phosphate importer (TC 3.A.1.7) family. In terms of assembly, the complex is composed of two ATP-binding proteins (PstB), two transmembrane proteins (PstC and PstA) and a solute-binding protein (PstS).

The protein localises to the cell inner membrane. It catalyses the reaction phosphate(out) + ATP + H2O = ADP + 2 phosphate(in) + H(+). Its function is as follows. Part of the ABC transporter complex PstSACB involved in phosphate import. Responsible for energy coupling to the transport system. This chain is Phosphate import ATP-binding protein PstB, found in Alcaligenes faecalis.